The primary structure comprises 313 residues: Glutathione synthetase (313 aa).

The region spanning 125 to 309 (KLFVMDFTEL…IAAKIWDVIE (185 aa)) is the ATP-grasp domain. Position 151–207 (151–207 (RAEHGAVVMKPLHGHGGAAVFRVLPQDINFGSLYDMFAVTFREPWVIQRFLPEVKHG)) interacts with ATP. Residues Glu280 and Asn282 each coordinate Mg(2+).

The protein belongs to the prokaryotic GSH synthase family. Requires Mg(2+) as cofactor. Mn(2+) is required as a cofactor.

It catalyses the reaction gamma-L-glutamyl-L-cysteine + glycine + ATP = glutathione + ADP + phosphate + H(+). Its pathway is sulfur metabolism; glutathione biosynthesis; glutathione from L-cysteine and L-glutamate: step 2/2. This chain is Glutathione synthetase, found in Rhodopseudomonas palustris (strain ATCC BAA-98 / CGA009).